We begin with the raw amino-acid sequence, 322 residues long: Aldo-keto reductase family 1 member C13 (322 aa).

NAD(+) contacts are provided by residues 20 to 24 (GFGTY) and Asp-50. The active-site Proton donor is the Tyr-55. Residue His-117 participates in substrate binding. NAD(+)-binding positions include 166 to 167 (SN), Gln-190, 216 to 224 (FGALGTQRY), and 270 to 280 (QSFYESEMKEN).

Belongs to the aldo/keto reductase family. Monomer. Post-translationally, the N-terminus is blocked.

It catalyses the reaction morphine + NAD(+) = morphinone + NADH + H(+). It carries out the reaction morphine + NADP(+) = morphinone + NADPH + H(+). Its activity is regulated as follows. Strongly inhibited by sulfhydryl reagents and ketamine, but not by pyrazole, barbital and indomethacine. Catalyzes the dehydrogenation of morphine to morphinone. The enzyme also exhibits significant activity for a variety of cyclic and alicyclic alcohols. In addition to xenobiotics, the enzyme catalyzes the dehydrogenation of 17-beta-hydroxysteroids with much higher affinities than morphine. Uses both NAD and NADP, but the activity is much greater with NAD than with NADP. The sequence is that of Aldo-keto reductase family 1 member C13 (AKR1C13) from Mesocricetus auratus (Golden hamster).